The following is a 528-amino-acid chain: Ladinin-1 (528 aa).

A disordered region spans residues 1-404 (MSVSRKDWSA…NSETPLTRSA (404 aa)). Phosphoserine occurs at positions 38, 56, 62, 72, and 76. The span at 88–97 (RTRKERRQRR) shows a compositional bias: basic residues. The residue at position 119 (serine 119) is a Phosphoserine. Positions 134–173 (KKVEALPRRRLSREQRGPWAQDEERLKNRELAEGEKRLPE) are enriched in basic and acidic residues. 4 SEK repeats span residues 184–186 (SEK), 190–192 (SEK), 202–204 (SEK), and 208–210 (SEK). A 6 X SEK repeats region spans residues 184-281 (SEKTPVSEKT…MQERKLVSEK (98 aa)). Basic and acidic residues-rich tracts occupy residues 218-231 (SLTEKRHSPEKLVP) and 267-279 (IVSEKMQERKLVS). SEK repeat units follow at residues 269–271 (SEK) and 279–281 (SEK). The span at 304–316 (EQPQTTGGSQATT) shows a compositional bias: polar residues. Phosphoserine is present on residues serine 328, serine 358, serine 367, serine 405, and serine 496. A compositionally biased stretch (low complexity) spans 365–377 (TPSPTLLTYSSSL). The segment at 492–528 (KTQDSGDHGSQEVRKEASVTKRAQWGSKPSTSLDAEV) is disordered. Basic and acidic residues predominate over residues 495 to 510 (DSGDHGSQEVRKEASV). Over residues 518–528 (SKPSTSLDAEV) the composition is skewed to polar residues.

As to expression, expressed in kidney, lung and keratinocytes followed by liver, spleen and brain. Not expressed in testis, skeletal and heart muscle and in fibroblasts.

The protein localises to the secreted. Its subcellular location is the extracellular space. It is found in the extracellular matrix. The protein resides in the basement membrane. Anchoring filament protein which is a component of the basement membrane zone. The polypeptide is Ladinin-1 (Lad1) (Mus musculus (Mouse)).